Here is a 315-residue protein sequence, read N- to C-terminus: tRNA dimethylallyltransferase (315 aa).

18–25 (GPTASGKT) lines the ATP pocket. 20 to 25 (TASGKT) is a binding site for substrate. Interaction with substrate tRNA stretches follow at residues 43–46 (DSAL), 167–171 (QRLSR), and 248–253 (RCVGYR).

This sequence belongs to the IPP transferase family. In terms of assembly, monomer. The cofactor is Mg(2+).

The enzyme catalyses adenosine(37) in tRNA + dimethylallyl diphosphate = N(6)-dimethylallyladenosine(37) in tRNA + diphosphate. In terms of biological role, catalyzes the transfer of a dimethylallyl group onto the adenine at position 37 in tRNAs that read codons beginning with uridine, leading to the formation of N6-(dimethylallyl)adenosine (i(6)A). In Pseudoalteromonas atlantica (strain T6c / ATCC BAA-1087), this protein is tRNA dimethylallyltransferase.